A 78-amino-acid chain; its full sequence is Large ribosomal subunit protein bL28 (78 aa).

Residues 1-33 are disordered; the sequence is MARKDDVTGEGPVTGNSVSDSNQKTNRRFKRNL. Positions 14–24 are enriched in polar residues; sequence TGNSVSDSNQK.

It belongs to the bacterial ribosomal protein bL28 family.

This is Large ribosomal subunit protein bL28 from Salinibacter ruber (strain DSM 13855 / M31).